A 500-amino-acid chain; its full sequence is Probable cytosol aminopeptidase (500 aa).

Positions 264 and 269 each coordinate Mn(2+). Lysine 276 is a catalytic residue. Residues aspartate 287, aspartate 346, and glutamate 348 each coordinate Mn(2+). The active site involves arginine 350.

The protein belongs to the peptidase M17 family. Requires Mn(2+) as cofactor.

Its subcellular location is the cytoplasm. It carries out the reaction Release of an N-terminal amino acid, Xaa-|-Yaa-, in which Xaa is preferably Leu, but may be other amino acids including Pro although not Arg or Lys, and Yaa may be Pro. Amino acid amides and methyl esters are also readily hydrolyzed, but rates on arylamides are exceedingly low.. The catalysed reaction is Release of an N-terminal amino acid, preferentially leucine, but not glutamic or aspartic acids.. In terms of biological role, presumably involved in the processing and regular turnover of intracellular proteins. Catalyzes the removal of unsubstituted N-terminal amino acids from various peptides. The protein is Probable cytosol aminopeptidase of Rhodopseudomonas palustris (strain TIE-1).